The sequence spans 1071 residues: Ubiquitin carboxyl-terminal hydrolase 7 (1071 aa).

A disordered region spans residues 467-532; it reads KARLQQEQQQ…MPTTPEIPPP (66 aa). Residues 471–480 show a composition bias toward low complexity; that stretch reads QQEQQQQQQQ. The span at 481–495 shows a compositional bias: polar residues; that stretch reads PDSQDSFSAKESSTK. Composition is skewed to pro residues over residues 497–507 and 516–532; these read PEPPSWKPPDL and PPPP…IPPP. The USP domain occupies 609–1069; that stretch reads TGLRNLGNTC…DVYVLFYERV (461 aa). Cys-618 serves as the catalytic Nucleophile. A disordered region spans residues 913–942; it reads RMLGGSGKRSSSSTPFSTGGNDSNNSSDYK. Residues 920–932 show a composition bias toward polar residues; sequence KRSSSSTPFSTGG. His-1014 acts as the Proton acceptor in catalysis.

The protein belongs to the peptidase C19 family.

The protein resides in the cytoplasm. It carries out the reaction Thiol-dependent hydrolysis of ester, thioester, amide, peptide and isopeptide bonds formed by the C-terminal Gly of ubiquitin (a 76-residue protein attached to proteins as an intracellular targeting signal).. Its function is as follows. Involved in the sorting of ubiquitinated cargo proteins at the multivesicular body (MVB). This chain is Ubiquitin carboxyl-terminal hydrolase 7 (UBP7), found in Saccharomyces cerevisiae (strain ATCC 204508 / S288c) (Baker's yeast).